A 500-amino-acid chain; its full sequence is Metacaspase-5 (500 aa).

An N-terminal signal peptide occupies residues 1-18 (MDAALALLFGQVATAVLP). The segment at 19 to 63 (YVVNSIGRVPRPKRVDVKKAMGEAHQCRPVVPYRAPRPYTEGRVK) is important for catalytic activity. Residues Asn70 and Asn113 are each glycosylated (N-linked (GlcNAc...) asparagine). His147 is an active-site residue. Asp162, Asp178, and Asp179 together coordinate Ca(2+). Residue Cys202 is part of the active site. Residue Asp209 participates in Ca(2+) binding. N-linked (GlcNAc...) asparagine glycans are attached at residues Asn219, Asn235, Asn258, Asn264, Asn283, and Asn332. Disordered stretches follow at residues 358-419 (EATL…QAYY) and 444-500 (QPPQ…PGRK). Residues 379-389 (ASTSNGKSNPG) are compositionally biased toward polar residues. The segment covering 444–461 (QPPQQAYYQPPQQAYYQP) has biased composition (low complexity).

Belongs to the peptidase C14B family.

Its subcellular location is the recycling endosome. Cysteine protease that cleaves specifically after arginine or lysine residues. This chain is Metacaspase-5, found in Trypanosoma brucei brucei.